Here is a 311-residue protein sequence, read N- to C-terminus: Putative UPF0607 protein ENSP00000382826 (311 aa).

Positions 48 to 61 (AEEPKEATEVKDQV) are enriched in basic and acidic residues. Disordered regions lie at residues 48 to 99 (AEEP…WYNP), 186 to 229 (GLLM…PLQL), and 291 to 311 (RKQL…GSCL). Residues 78–97 (EAASTSRPLETQGNLTSSWY) show a composition bias toward polar residues. 2 stretches are compositionally biased toward basic residues: residues 213–222 (AGHRSRKRKL) and 291–305 (RKQL…RQGR).

This sequence belongs to the UPF0607 family.

The protein is Putative UPF0607 protein ENSP00000382826 of Homo sapiens (Human).